A 143-amino-acid polypeptide reads, in one-letter code: Hexaprenyl-diphosphate synthase small subunit ((2E,6E)-farnesyl-diphosphate specific) (143 aa).

In terms of assembly, dimer of heterodimer or heterotetramer composed of a small (Hexs-a) and large (Hexs-B) subunit.

The enzyme catalyses 3 isopentenyl diphosphate + (2E,6E)-farnesyl diphosphate = all-trans-hexaprenyl diphosphate + 3 diphosphate. Its function is as follows. Catalyzes the condensation of three molecules of isopentenyl diphosphate with farnesyl diphosphate (FPP) to yield (all-E)-hexaprenyl diphosphate (HexPP; C30), the precursor of the prenyl side chain of menaquinone-6. Large subunit Hexs-B catalyzes the condensation reaction and the final product chain length is cooperatively regulated by both the Hexs-A and Hexs-B subunits using the whole size of the hydrophobic cleft as a ruler. This chain is Hexaprenyl-diphosphate synthase small subunit ((2E,6E)-farnesyl-diphosphate specific) (hexs-a), found in Micrococcus luteus (Micrococcus lysodeikticus).